A 239-amino-acid chain; its full sequence is Purine nucleoside phosphorylase DeoD-type (239 aa).

H5 contributes to the a purine D-ribonucleoside binding site. Phosphate is bound by residues G21, R25, R44, and 89-92; that span reads RVGS. A purine D-ribonucleoside is bound by residues 180–182 and 204–205; these read EME and SD. The active-site Proton donor is the D205.

It belongs to the PNP/UDP phosphorylase family. Homohexamer; trimer of homodimers.

The enzyme catalyses a purine D-ribonucleoside + phosphate = a purine nucleobase + alpha-D-ribose 1-phosphate. The catalysed reaction is a purine 2'-deoxy-D-ribonucleoside + phosphate = a purine nucleobase + 2-deoxy-alpha-D-ribose 1-phosphate. In terms of biological role, catalyzes the reversible phosphorolytic breakdown of the N-glycosidic bond in the beta-(deoxy)ribonucleoside molecules, with the formation of the corresponding free purine bases and pentose-1-phosphate. In Klebsiella pneumoniae, this protein is Purine nucleoside phosphorylase DeoD-type.